The following is a 330-amino-acid chain: Phytanoyl-CoA hydroxylase-interacting protein (330 aa).

A Fibronectin type-III domain is found at 6-115 (TPHSIEINNI…ETVEFCTGDY (110 aa)). 2 N-linked (GlcNAc...) asparagine glycosylation sites follow: N14 and N325.

Belongs to the PHYHIP family. Interacts with PHYH and ADGRB1. In terms of tissue distribution, highly expressed in the brain.

Its interaction with PHYH suggests a role in the development of the central system. The sequence is that of Phytanoyl-CoA hydroxylase-interacting protein (PHYHIP) from Homo sapiens (Human).